The following is a 579-amino-acid chain: Proline--tRNA ligase (579 aa).

The protein belongs to the class-II aminoacyl-tRNA synthetase family. ProS type 1 subfamily. Homodimer.

It localises to the cytoplasm. The enzyme catalyses tRNA(Pro) + L-proline + ATP = L-prolyl-tRNA(Pro) + AMP + diphosphate. Catalyzes the attachment of proline to tRNA(Pro) in a two-step reaction: proline is first activated by ATP to form Pro-AMP and then transferred to the acceptor end of tRNA(Pro). As ProRS can inadvertently accommodate and process non-cognate amino acids such as alanine and cysteine, to avoid such errors it has two additional distinct editing activities against alanine. One activity is designated as 'pretransfer' editing and involves the tRNA(Pro)-independent hydrolysis of activated Ala-AMP. The other activity is designated 'posttransfer' editing and involves deacylation of mischarged Ala-tRNA(Pro). The misacylated Cys-tRNA(Pro) is not edited by ProRS. The polypeptide is Proline--tRNA ligase (Chlamydia muridarum (strain MoPn / Nigg)).